Here is a 488-residue protein sequence, read N- to C-terminus: MRATMARAIMLQGTGSDVGKTVLVAGLCRLAANRGLTVRPFKPQNMSNNAAVADDGGEIGRAQWLQSLAARTPSSVQMNPVLLKPQSENGSQIIVQGRVFGQAKGRDYQRLKPELLGAVLESFEKVAAGADLVIVEGAGSPAEINLRAGDIANMGFATRAGVPVVLVGDIDRGGVIASLVGTHAILEDGDRAMIAGYIINKFRGDVSLFDDGVRAIEGFTGWPCFGIVPWLRGAARLPAEDSVVLERLVRGGAGALKIAVPVLPRIANFDDLDPLRSEPDVELVFVRSGERIPADASLVVLPGSKSTISDLADFRAQGWDRDLQAHVRRGGRVIGICGGYQMLGRMVHDPLGIEGGTLETPGLGLLDIETEMAPEKTVRNSQARSTEYDAPLAGYQIHLGVTRGPDCDRPSAIIDGASDGALSADGRIMGTYLHGLFGSDAYRAGLLQSFGLSGERRNYRESVEQALDEIAGELERHLDPRWLAGLLG.

Positions A255–Y442 constitute a GATase cobBQ-type domain. C337 (nucleophile) is an active-site residue. Residue H434 is part of the active site.

Belongs to the CobB/CobQ family. CobQ subfamily.

The protein operates within cofactor biosynthesis; adenosylcobalamin biosynthesis. Catalyzes amidations at positions B, D, E, and G on adenosylcobyrinic A,C-diamide. NH(2) groups are provided by glutamine, and one molecule of ATP is hydrogenolyzed for each amidation. The chain is Cobyric acid synthase from Rhizobium johnstonii (strain DSM 114642 / LMG 32736 / 3841) (Rhizobium leguminosarum bv. viciae).